The sequence spans 416 residues: Na(+)/H(+) antiporter NhaA (416 aa).

The next 9 membrane-spanning stretches (helical) occupy residues 18 to 38 (VGGA…NSPW), 59 to 79 (LTLA…VAGL), 97 to 117 (ALPI…AAVI), 127 to 147 (GWAI…ALTG), 167 to 187 (LLAI…LWLL), 265 to 285 (GICV…ATVF), 297 to 317 (VMLG…WVAI), 333 to 353 (MFAL…VAEL), and 363 to 383 (LAKA…SALL). The tract at residues 396-416 (ALELQPDEGDASDPSEGGSLR) is disordered.

The protein belongs to the NhaA Na(+)/H(+) (TC 2.A.33) antiporter family.

It localises to the cell membrane. It carries out the reaction Na(+)(in) + 2 H(+)(out) = Na(+)(out) + 2 H(+)(in). In terms of biological role, na(+)/H(+) antiporter that extrudes sodium in exchange for external protons. This is Na(+)/H(+) antiporter NhaA from Nocardia farcinica (strain IFM 10152).